The chain runs to 128 residues: Glycoprotein hormone alpha-2 (128 aa).

The N-terminal stretch at 1–20 is a signal peptide; the sequence is MPMAPRVLLLCLLGLAVTEG. Disulfide bonds link Cys-30-Cys-88, Cys-47-Cys-102, Cys-56-Cys-118, and Cys-60-Cys-120. N-linked (GlcNAc...) asparagine glycosylation is found at Asn-36 and Asn-80.

This sequence belongs to the glycoprotein hormones subunit alpha family. In terms of assembly, heterodimer with GPHB5; this heterodimer interacts with thyroid-stimulating hormone receptor (TSHR), and hence stimulates cAMP production.

The protein localises to the secreted. Functionally, functions as a heterodimeric glycoprotein hormone with GPHB5 able to bind and activate the thyroid-stimulating hormone receptor (TSHR), leading to increased cAMP production. Plays a central role in controlling thyroid cell metabolism. The protein is Glycoprotein hormone alpha-2 (Gpha2) of Mus musculus (Mouse).